The sequence spans 300 residues: tRNA dimethylallyltransferase 2 (300 aa).

An ATP-binding site is contributed by 13 to 20; the sequence is GPTGVGKT. 15 to 20 lines the substrate pocket; it reads TGVGKT. Residues 38–41 form an interaction with substrate tRNA region; that stretch reads DSRQ.

Belongs to the IPP transferase family. In terms of assembly, monomer. Requires Mg(2+) as cofactor.

It carries out the reaction adenosine(37) in tRNA + dimethylallyl diphosphate = N(6)-dimethylallyladenosine(37) in tRNA + diphosphate. In terms of biological role, catalyzes the transfer of a dimethylallyl group onto the adenine at position 37 in tRNAs that read codons beginning with uridine, leading to the formation of N6-(dimethylallyl)adenosine (i(6)A). The polypeptide is tRNA dimethylallyltransferase 2 (Porphyromonas gingivalis (strain ATCC 33277 / DSM 20709 / CIP 103683 / JCM 12257 / NCTC 11834 / 2561)).